A 293-amino-acid polypeptide reads, in one-letter code: 4-diphosphocytidyl-2-C-methyl-D-erythritol kinase (293 aa).

Residue Lys16 is part of the active site. Position 99-109 (99-109 (PMGAGLGGGSS)) interacts with ATP. Residue Asp141 is part of the active site.

It belongs to the GHMP kinase family. IspE subfamily.

It catalyses the reaction 4-CDP-2-C-methyl-D-erythritol + ATP = 4-CDP-2-C-methyl-D-erythritol 2-phosphate + ADP + H(+). It functions in the pathway isoprenoid biosynthesis; isopentenyl diphosphate biosynthesis via DXP pathway; isopentenyl diphosphate from 1-deoxy-D-xylulose 5-phosphate: step 3/6. In terms of biological role, catalyzes the phosphorylation of the position 2 hydroxy group of 4-diphosphocytidyl-2C-methyl-D-erythritol. This is 4-diphosphocytidyl-2-C-methyl-D-erythritol kinase from Burkholderia multivorans (strain ATCC 17616 / 249).